A 932-amino-acid polypeptide reads, in one-letter code: 2-oxoglutarate dehydrogenase E1 component (932 aa).

This sequence belongs to the alpha-ketoglutarate dehydrogenase family. Homodimer. Part of the 2-oxoglutarate dehydrogenase (OGDH) complex composed of E1 (2-oxoglutarate dehydrogenase), E2 (dihydrolipoamide succinyltransferase) and E3 (dihydrolipoamide dehydrogenase); the complex contains multiple copies of the three enzymatic components (E1, E2 and E3). Requires thiamine diphosphate as cofactor.

It catalyses the reaction N(6)-[(R)-lipoyl]-L-lysyl-[protein] + 2-oxoglutarate + H(+) = N(6)-[(R)-S(8)-succinyldihydrolipoyl]-L-lysyl-[protein] + CO2. Its function is as follows. E1 component of the 2-oxoglutarate dehydrogenase (OGDH) complex which catalyzes the decarboxylation of 2-oxoglutarate, the first step in the conversion of 2-oxoglutarate to succinyl-CoA and CO(2). The chain is 2-oxoglutarate dehydrogenase E1 component from Staphylococcus aureus (strain MW2).